Here is a 207-residue protein sequence, read N- to C-terminus: Suppressor of IKBKE 1 (207 aa).

2 coiled-coil regions span residues 70–102 and 164–192; these read HILL…DALE and CKVQ…ESLQ.

This sequence belongs to the SIKE family. In terms of assembly, interacts with IKBKE and TBK1 via its coiled coil region. Interaction with TBK1 is disrupted upon viral infection or TLR3 stimulation. Interacts with CDC42BPB. Interacts with SIKE1 which mediates association with the STRIPAK core complex composed of PP2A catalytic and scaffolding subunits, the striatins (PP2A regulatory subunits), the striatin-associated proteins MOB4, STRIP1 and STRIP2, PDCD10 and members of the STE20 kinases, such as STK24 and STK26.

It is found in the cytoplasm. In terms of biological role, physiological suppressor of IKK-epsilon and TBK1 that plays an inhibitory role in virus- and TLR3-triggered IRF3. Inhibits TLR3-mediated activation of interferon-stimulated response elements (ISRE) and the IFN-beta promoter. May act by disrupting the interactions of IKBKE or TBK1 with TICAM1/TRIF, IRF3 and RIGI. Does not inhibit NF-kappa-B activation pathways. Associates with the striatin-interacting phosphatase and kinase (STRIPAK) core complex, forming the extended (SIKE1:SLMAP)STRIPAK complex. The (SIKE1:SLMAP)STRIPAK complex dephosphorylates STK3 leading to the inhibition of Hippo signaling and the control of cell growth. This Mus musculus (Mouse) protein is Suppressor of IKBKE 1 (Sike1).